We begin with the raw amino-acid sequence, 561 residues long: Dihydroxy-acid dehydratase (561 aa).

C51 is a binding site for [2Fe-2S] cluster. D83 lines the Mg(2+) pocket. Residue C124 coordinates [2Fe-2S] cluster. Residues D125 and K126 each contribute to the Mg(2+) site. N6-carboxylysine is present on K126. C196 serves as a coordination point for [2Fe-2S] cluster. E448 contributes to the Mg(2+) binding site. The Proton acceptor role is filled by S474.

Belongs to the IlvD/Edd family. As to quaternary structure, homodimer. [2Fe-2S] cluster serves as cofactor. Mg(2+) is required as a cofactor.

It carries out the reaction (2R)-2,3-dihydroxy-3-methylbutanoate = 3-methyl-2-oxobutanoate + H2O. The catalysed reaction is (2R,3R)-2,3-dihydroxy-3-methylpentanoate = (S)-3-methyl-2-oxopentanoate + H2O. Its pathway is amino-acid biosynthesis; L-isoleucine biosynthesis; L-isoleucine from 2-oxobutanoate: step 3/4. It participates in amino-acid biosynthesis; L-valine biosynthesis; L-valine from pyruvate: step 3/4. Its function is as follows. Functions in the biosynthesis of branched-chain amino acids. Catalyzes the dehydration of (2R,3R)-2,3-dihydroxy-3-methylpentanoate (2,3-dihydroxy-3-methylvalerate) into 2-oxo-3-methylpentanoate (2-oxo-3-methylvalerate) and of (2R)-2,3-dihydroxy-3-methylbutanoate (2,3-dihydroxyisovalerate) into 2-oxo-3-methylbutanoate (2-oxoisovalerate), the penultimate precursor to L-isoleucine and L-valine, respectively. The protein is Dihydroxy-acid dehydratase of Pyrobaculum neutrophilum (strain DSM 2338 / JCM 9278 / NBRC 100436 / V24Sta) (Thermoproteus neutrophilus).